A 62-amino-acid polypeptide reads, in one-letter code: Potassium channel toxin alpha-KTx 6.21 (62 aa).

The signal sequence occupies residues 1 to 24; it reads MNAKLIYLLLVVTTMMLTFDTTQA. 4 disulfide bridges follow: C29/C50, C35/C55, C39/C57, and C45/C60. V61 carries the post-translational modification Valine amide.

The protein belongs to the short scorpion toxin superfamily. Potassium channel inhibitor family. Alpha-KTx 06 subfamily. C-terminal amidation is important for activity. There is a 50-70-fold decrease in ability to inhibit Kv1.2/KCNA2 when the toxin is not amidated. This decrease may be explained by a 23-fold slower association rate (k(on)) together with a 2-fold faster dissociation rate (k(off)). As to expression, expressed by the venom gland.

It is found in the secreted. Reversible blocker of voltage-gated potassium channels with fast binding and unbinding kinetics. Has highest activity on human voltage-gated potassium channel Kv1.2/KCNA2 channels (IC(50)=0.11-0.16 nM), whereas its affinity for other channels tested was in the nanomolar range (hKv1.1/KCNA1, IC(50)=253 nM; hKv1.3/KCNA3, IC(50)=91 nM; and hKCa3.1/KCNN4, IC(50)=70 nM). The protein is Potassium channel toxin alpha-KTx 6.21 of Urodacus yaschenkoi (Inland robust scorpion).